The following is a 357-amino-acid chain: DNA replication and repair protein RecF (357 aa).

An ATP-binding site is contributed by glycine 30 to threonine 37.

The protein belongs to the RecF family.

It localises to the cytoplasm. Functionally, the RecF protein is involved in DNA metabolism; it is required for DNA replication and normal SOS inducibility. RecF binds preferentially to single-stranded, linear DNA. It also seems to bind ATP. The protein is DNA replication and repair protein RecF of Vibrio campbellii (strain ATCC BAA-1116).